The sequence spans 125 residues: Casein kinase I isoform alpha (125 aa).

A Protein kinase domain is found at 1-125 (GEEVAVKLES…LIDFGLAKKY (125 aa)). K7 contributes to the ATP binding site. Residue D97 is the Proton acceptor of the active site.

It belongs to the protein kinase superfamily. CK1 Ser/Thr protein kinase family. Casein kinase I subfamily. In terms of assembly, interacts with the Axin complex. Interacts with TUT1, leading to TUT1 phosphorylation. Interacts with FAM83A, FAM83B, FAM83C, FAM83D, FAM83E, FAM83F, FAM83G and FAM83H (via DUF1669). Interaction with FAM83H recruits CSNK1A1 to keratin filaments. Post-translationally, phosphorylated by MTOR in response to mitogenic stimulation, leading to its activation.

The protein resides in the cytoplasm. It localises to the cytoskeleton. Its subcellular location is the microtubule organizing center. It is found in the centrosome. The protein localises to the chromosome. The protein resides in the centromere. It localises to the kinetochore. Its subcellular location is the nucleus speckle. It is found in the cilium basal body. The protein localises to the spindle. It catalyses the reaction L-seryl-[protein] + ATP = O-phospho-L-seryl-[protein] + ADP + H(+). It carries out the reaction L-threonyl-[protein] + ATP = O-phospho-L-threonyl-[protein] + ADP + H(+). In terms of biological role, casein kinases are operationally defined by their preferential utilization of acidic proteins such as caseins as substrates. It can phosphorylate a large number of proteins. Participates in Wnt signaling. Phosphorylates CTNNB1 at 'Ser-45'. May phosphorylate PER1 and PER2. May play a role in segregating chromosomes during mitosis. May play a role in keratin cytoskeleton disassembly and thereby, it may regulate epithelial cell migration. Acts as a positive regulator of mTORC1 and mTORC2 signaling in response to nutrients by mediating phosphorylation of DEPTOR inhibitor. Acts as an inhibitor of NLRP3 inflammasome assembly by mediating phosphorylation of NLRP3. The polypeptide is Casein kinase I isoform alpha (CSNK1A1) (Sus scrofa (Pig)).